The chain runs to 312 residues: Very-long-chain 3-oxoacyl-CoA reductase (312 aa).

Residues 4–24 (ALPAAGFLYWVGASTIAYLTL) form a helical membrane-spanning segment. Residue 50-79 (GEWAVVTGGTDGIGKSYAEELAKRGMKIVL) participates in NADP(+) binding. 2 helical membrane passes run 182–202 (GVIL…LTVY) and 271–291 (GYVI…WIYF). Ser189 provides a ligand contact to substrate. Residue Tyr202 is the Proton acceptor of the active site. The short motif at 308–312 (KTKKN) is the Di-lysine motif element.

This sequence belongs to the short-chain dehydrogenases/reductases (SDR) family. 17-beta-HSD 3 subfamily.

It is found in the endoplasmic reticulum membrane. It carries out the reaction a very-long-chain (3R)-3-hydroxyacyl-CoA + NADP(+) = a very-long-chain 3-oxoacyl-CoA + NADPH + H(+). The catalysed reaction is 17beta-estradiol + NAD(+) = estrone + NADH + H(+). The enzyme catalyses 17beta-estradiol + NADP(+) = estrone + NADPH + H(+). It catalyses the reaction 3-oxooctadecanoyl-CoA + NADPH + H(+) = (3R)-hydroxyoctadecanoyl-CoA + NADP(+). It carries out the reaction (7Z,10Z,13Z,16Z)-3-oxodocosatetraenoyl-CoA + NADPH + H(+) = (3R)-hydroxy-(7Z,10Z,13Z,16Z)-docosatetraenoyl-CoA + NADP(+). The catalysed reaction is 3-oxo-(7Z,10Z,13Z,16Z,19Z)-docosapentaenoyl-CoA + NADPH + H(+) = (3R)-hydroxy-(7Z,10Z,13Z,16Z,19Z)-docosapentaenoyl-CoA + NADP(+). The enzyme catalyses (8Z,11Z,14Z)-3-oxoeicosatrienoyl-CoA + NADPH + H(+) = (3R)-hydroxy-(8Z,11Z,14Z)-eicosatrienoyl-CoA + NADP(+). It functions in the pathway lipid metabolism; fatty acid biosynthesis. The protein operates within steroid biosynthesis; estrogen biosynthesis. Catalyzes the second of the four reactions of the long-chain fatty acids elongation cycle. This endoplasmic reticulum-bound enzymatic process, allows the addition of two carbons to the chain of long- and very long-chain fatty acids/VLCFAs per cycle. This enzyme has a 3-ketoacyl-CoA reductase activity, reducing 3-ketoacyl-CoA to 3-hydroxyacyl-CoA, within each cycle of fatty acid elongation. Thereby, it may participate in the production of VLCFAs of different chain lengths that are involved in multiple biological processes as precursors of membrane lipids and lipid mediators. May also catalyze the transformation of estrone (E1) into estradiol (E2) and play a role in estrogen formation. In Rattus norvegicus (Rat), this protein is Very-long-chain 3-oxoacyl-CoA reductase.